Consider the following 1047-residue polypeptide: tRNA wybutosine-synthesizing protein 4 (1047 aa).

S-adenosyl-L-methionine contacts are provided by residues R69, G95, D122, 169 to 170 (DL), and E196. In terms of domain architecture, JmjC spans 814-1003 (GRQYLRSISA…AAGRDVYGNR (190 aa)).

This sequence belongs to the methyltransferase superfamily. LCMT family.

The catalysed reaction is 7-[(3S)-3-amino-3-carboxypropyl]wyosine(37) in tRNA(Phe) + S-adenosyl-L-methionine = 7-[(3S)-(3-amino-3-methoxycarbonyl)propyl]wyosine(37) in tRNA(Phe) + S-adenosyl-L-homocysteine. The enzyme catalyses 7-[(3S)-(3-amino-3-methoxycarbonyl)propyl]wyosine(37) in tRNA(Phe) + S-adenosyl-L-methionine + CO2 = wybutosine(37) in tRNA(Phe) + S-adenosyl-L-homocysteine + 2 H(+). It participates in tRNA modification; wybutosine-tRNA(Phe) biosynthesis. Functionally, probable S-adenosyl-L-methionine-dependent methyltransferase that acts as a component of the wybutosine biosynthesis pathway. Wybutosine is a hyper modified guanosine with a tricyclic base found at the 3'-position adjacent to the anticodon of eukaryotic phenylalanine tRNA. May methylate the carboxyl group of leucine residues to form alpha-leucine ester residues. This is tRNA wybutosine-synthesizing protein 4 (ppm2) from Aspergillus fumigatus (strain ATCC MYA-4609 / CBS 101355 / FGSC A1100 / Af293) (Neosartorya fumigata).